The sequence spans 74 residues: Putative membrane protein insertion efficiency factor (74 aa).

Belongs to the UPF0161 family.

It is found in the cell inner membrane. Functionally, could be involved in insertion of integral membrane proteins into the membrane. The chain is Putative membrane protein insertion efficiency factor from Blochmanniella floridana.